The chain runs to 313 residues: Homoserine O-succinyltransferase (313 aa).

Cys-142 functions as the Acyl-thioester intermediate in the catalytic mechanism. Substrate-binding residues include Lys-163 and Ser-192. The active-site Proton acceptor is the His-235. The active site involves Glu-237. Arg-249 lines the substrate pocket.

The protein belongs to the MetA family.

Its subcellular location is the cytoplasm. It carries out the reaction L-homoserine + succinyl-CoA = O-succinyl-L-homoserine + CoA. It functions in the pathway amino-acid biosynthesis; L-methionine biosynthesis via de novo pathway; O-succinyl-L-homoserine from L-homoserine: step 1/1. Its function is as follows. Transfers a succinyl group from succinyl-CoA to L-homoserine, forming succinyl-L-homoserine. This is Homoserine O-succinyltransferase from Vibrio campbellii (strain ATCC BAA-1116).